The following is a 138-amino-acid chain: Basic phospholipase A2 DsM-b1/DsM-b1' (138 aa).

The N-terminal stretch at 1-16 is a signal peptide; the sequence is MRTLWIVAMCLIGVEG. Disulfide bonds link C42/C131, C44/C60, C59/C111, C65/C138, C66/C104, C73/C97, and C91/C102. Positions 43, 45, and 47 each coordinate Ca(2+). H63 is an active-site residue. D64 contributes to the Ca(2+) binding site. D105 is an active-site residue.

Requires Ca(2+) as cofactor. In terms of tissue distribution, expressed by the venom gland.

It localises to the secreted. It catalyses the reaction a 1,2-diacyl-sn-glycero-3-phosphocholine + H2O = a 1-acyl-sn-glycero-3-phosphocholine + a fatty acid + H(+). Its function is as follows. Exhibits high hydrolytic activities and shows strong preference for the anionic micelles (dPPC with deoxycholate) to the zwitterionic micelles (dPPC with Triton X-100). PLA2 catalyzes the calcium-dependent hydrolysis of the 2-acyl groups in 3-sn-phosphoglycerides. The sequence is that of Basic phospholipase A2 DsM-b1/DsM-b1' from Daboia siamensis (Eastern Russel's viper).